The sequence spans 219 residues: Ribosome maturation factor RimP (219 aa).

Residues 195–219 are disordered; that stretch reads EGRIPGDDLGAEPEDAASTETQEKK.

Belongs to the RimP family.

The protein localises to the cytoplasm. In terms of biological role, required for maturation of 30S ribosomal subunits. This is Ribosome maturation factor RimP from Brucella melitensis biotype 2 (strain ATCC 23457).